We begin with the raw amino-acid sequence, 271 residues long: 2-dehydro-3-deoxyphosphooctonate aldolase (271 aa).

Belongs to the KdsA family.

It localises to the cytoplasm. The enzyme catalyses D-arabinose 5-phosphate + phosphoenolpyruvate + H2O = 3-deoxy-alpha-D-manno-2-octulosonate-8-phosphate + phosphate. The protein operates within carbohydrate biosynthesis; 3-deoxy-D-manno-octulosonate biosynthesis; 3-deoxy-D-manno-octulosonate from D-ribulose 5-phosphate: step 2/3. Its pathway is bacterial outer membrane biogenesis; lipopolysaccharide biosynthesis. This Campylobacter jejuni subsp. jejuni serotype O:6 (strain 81116 / NCTC 11828) protein is 2-dehydro-3-deoxyphosphooctonate aldolase.